A 347-amino-acid chain; its full sequence is Protein XRP2 (347 aa).

Positions 1–11 (MGCCFTKRRKS) are enriched in basic residues. Residues 1-22 (MGCCFTKRRKSEKAEGEEEQPK) form a disordered region. The N-myristoyl glycine moiety is linked to residue Gly-2. Residue Cys-3 is the site of S-palmitoyl cysteine attachment. The C-CAP/cofactor C-like domain maps to 21–176 (PKLYSWDQRE…IWSHVHDFTP (156 aa)). Residues 95–96 (GS) and 112–115 (QQFR) each bind GTP.

This sequence belongs to the TBCC family. Found in a complex with ARL3, RP2 and UNC119 (or UNC119B); RP2 induces hydrolysis of GTP ARL3 in the complex, leading to the release of UNC119 (or UNC119B). Interacts with ARL3; interaction is direct and stimulated with the activated GTP-bound form of ARL3. Myristoylated on Gly-2; which may be required for membrane targeting. Post-translationally, palmitoylated on Cys-3; which may be required for plasma membrane targeting. In terms of tissue distribution, retina (at protein level).

The protein localises to the cell membrane. Its subcellular location is the cell projection. It localises to the cilium. Its function is as follows. Acts as a GTPase-activating protein (GAP) involved in trafficking between the Golgi and the ciliary membrane. Involved in localization of proteins, such as NPHP3, to the cilium membrane by inducing hydrolysis of GTP ARL3, leading to the release of UNC119 (or UNC119B). Acts as a GTPase-activating protein (GAP) for tubulin in concert with tubulin-specific chaperone C, but does not enhance tubulin heterodimerization. Acts as a guanine nucleotide dissociation inhibitor towards ADP-ribosylation factor-like proteins. This Mus musculus (Mouse) protein is Protein XRP2 (Rp2).